Reading from the N-terminus, the 297-residue chain is Phosphate import ATP-binding protein PstB (297 aa).

The region spanning 50 to 292 (MRLRDVEVFY…PEHDLTEAYI (243 aa)) is the ABC transporter domain. 82–89 (GPSGCGKS) contacts ATP.

The protein belongs to the ABC transporter superfamily. Phosphate importer (TC 3.A.1.7) family. As to quaternary structure, the complex is composed of two ATP-binding proteins (PstB), two transmembrane proteins (PstC and PstA) and a solute-binding protein (PstS).

It is found in the cell inner membrane. The enzyme catalyses phosphate(out) + ATP + H2O = ADP + 2 phosphate(in) + H(+). Functionally, part of the ABC transporter complex PstSACB involved in phosphate import. Responsible for energy coupling to the transport system. The polypeptide is Phosphate import ATP-binding protein PstB (Alcanivorax borkumensis (strain ATCC 700651 / DSM 11573 / NCIMB 13689 / SK2)).